The chain runs to 205 residues: Regulator of G-protein signaling 4 (205 aa).

S-palmitoyl cysteine attachment occurs at residues cysteine 2, cysteine 12, and cysteine 95. The RGS domain maps to 62 to 178 (SLENLISHEC…LKSRFYLDLV (117 aa)).

In terms of processing, palmitoylated on Cys-2 and/or Cys-12. Post-translationally, phosphorylated by cyclic GMP-dependent protein kinase.

Its function is as follows. Inhibits signal transduction by increasing the GTPase activity of G protein alpha subunits thereby driving them into their inactive GDP-bound form. Activity on G(z)-alpha is inhibited by phosphorylation of the G-protein. Activity on G(z)-alpha and G(i)-alpha-1 is inhibited by palmitoylation of the G-protein. The chain is Regulator of G-protein signaling 4 (RGS4) from Bos taurus (Bovine).